A 170-amino-acid chain; its full sequence is Protein-export protein SecB (170 aa).

The protein belongs to the SecB family. In terms of assembly, homotetramer, a dimer of dimers. One homotetramer interacts with 1 SecA dimer.

The protein localises to the cytoplasm. In terms of biological role, one of the proteins required for the normal export of preproteins out of the cell cytoplasm. It is a molecular chaperone that binds to a subset of precursor proteins, maintaining them in a translocation-competent state. It also specifically binds to its receptor SecA. The polypeptide is Protein-export protein SecB (Pasteurella multocida (strain Pm70)).